Reading from the N-terminus, the 618-residue chain is MTGFWVLCFVLFPSSLSYPESWMPLVNLTHHILRDTNSSLFSNCWVCLSTQTQRSLAVPAPLSIWTDTPMKLHLTYSVRPFSGSFSISDIERRLRLFRPLTASYSFHNPDRRAIAFLQLVSSTGIFRIITRITSVIYPHKDRFFESAQRPLWGPLFTETVLRSQAPLCISRFFKVSAYATFVGNLSASLCNYTMHISPSTSHENLDLSTTHTFKQAMKRPDAKWKNPLRFSGPPSLIFSKPAYYPCPTDIKHCHTSPATPWMHCPQAPFGTCYNLTLFEPDNSTHPVTMSVNPTHFKVKLQGHRDPYPLSHYQPLTGAALSGQYSVWENEITVQENWDITSNIFSHLLSFSYAFCLNSSGVFFLCGTSTYICLPANWSGVCTLVFQYPDIELLPNNQTVPVPLFASVLSSDSVLRPKRSPHLFPFLAGLGISSALGTGIAGLATSTLYFQQLSKVLSETLEEIAASITTLQNQIDSLAGVVLQNRRALDLITAEKGGTCLFLQEECCFYVNQSGIVRDAARKLQERASELGQHSDSWGQWPDLGRWLPWLTPFLGPLLFLFFLLTFGSCLLNCLTRFVSQRLGSFVQDTAKRHVDSILQNFQYKKLPQDSPDEDTIPT.

Residues 1-17 (MTGFWVLCFVLFPSSLS) form the signal peptide. The Extracellular segment spans residues 18–545 (YPESWMPLVN…SWGQWPDLGR (528 aa)). N-linked (GlcNAc...) asparagine glycosylation occurs at N27. A CXXC motif is present at residues 44–47 (CWVC). 3 disulfide bridges follow: C44–C47, C44–C507, and C499–C506. N184, N274, and N357 each carry an N-linked (GlcNAc...) asparagine glycan. Residues 422 to 442 (LFPFLAGLGISSALGTGIAGL) are fusion peptide. The segment at 482-498 (LQNRRALDLITAEKGGT) is immunosuppression. The short motif at 499 to 507 (CLFLQEECC) is the CX6CC element. A helical membrane pass occupies residues 546–566 (WLPWLTPFLGPLLFLFFLLTF). Residues 567–618 (GSCLLNCLTRFVSQRLGSFVQDTAKRHVDSILQNFQYKKLPQDSPDEDTIPT) are Cytoplasmic-facing.

Belongs to the gamma type-C retroviral envelope protein family. As to quaternary structure, the mature protein consists of a trimer of SU-TM heterodimers. The SU-TM heterodimers are attached by a labile interchain disulfide bond. Post-translationally, synthesized as an inactive precursor that is heavily N-glycosylated and processed likely by furin in the Golgi to yield the mature SU and TM proteins. The cleavage site between SU and TM requires the minimal sequence [KR]-X-[KR]-R. The CXXC motif is highly conserved across a broad range of retroviral envelope proteins. It is thought to participate in the formation of a labile disulfide bond possibly with the CX6CC motif present in the transmembrane protein. Isomerization of the intersubunit disulfide bond to an SU intrachain disulfide bond is thought to occur upon receptor recognition in order to allow membrane fusion. As to expression, highly expressed in placenta where it localizes to syncytiotrophoblasts of the labyrinthine zona. Specifically localizes to syncytiotrophoblast layer II (SynT-II). Also detected at very low levels in ovary.

Its subcellular location is the cell membrane. Its function is as follows. This endogenous retroviral envelope protein has retained its original fusogenic properties. Together with Syna, participates in trophoblast fusion and the formation of a syncytium during placenta morphogenesis. Synb is specifically involved in formation of syncytiotrophoblast layer II (SynT-II). Promotes myoblast fusion, and may play a role in regeneration of damaged muscle tissue in males. May have immunosuppressive activity. The sequence is that of Syncytin-B from Mus musculus (Mouse).